Reading from the N-terminus, the 392-residue chain is Phosphoglycerate kinase (392 aa).

Substrate contacts are provided by residues 21–23 (DFN), arginine 36, 59–62 (HLGR), arginine 118, and arginine 151. Residues lysine 201, glycine 292, glutamate 323, and 349-352 (GGDS) contribute to the ATP site.

It belongs to the phosphoglycerate kinase family. In terms of assembly, monomer.

The protein resides in the cytoplasm. The catalysed reaction is (2R)-3-phosphoglycerate + ATP = (2R)-3-phospho-glyceroyl phosphate + ADP. The protein operates within carbohydrate degradation; glycolysis; pyruvate from D-glyceraldehyde 3-phosphate: step 2/5. The protein is Phosphoglycerate kinase of Borrelia turicatae (strain 91E135).